Consider the following 189-residue polypeptide: MQLWVGLGNPGPKYAMHRHNVGFMAADVIAEIHDFPPPVKKFQGWLQDGRIGSTRILLLKPGTFMNESGRSVRAALDFYKLAATDVTVFYDELDLAPMKVKVKRGGGAAGHNGIRSMIQHIGDDFRRIRIGIGHPGHKDRVTGHVLGNYHKSEMEPLADLLGAIAAEAEWLAKGDDVRFQSDLALRLQG.

Y14 contributes to the tRNA binding site. The Proton acceptor role is filled by H19. Positions 64, 66, and 112 each coordinate tRNA.

Belongs to the PTH family. Monomer.

Its subcellular location is the cytoplasm. It catalyses the reaction an N-acyl-L-alpha-aminoacyl-tRNA + H2O = an N-acyl-L-amino acid + a tRNA + H(+). Its function is as follows. Hydrolyzes ribosome-free peptidyl-tRNAs (with 1 or more amino acids incorporated), which drop off the ribosome during protein synthesis, or as a result of ribosome stalling. In terms of biological role, catalyzes the release of premature peptidyl moieties from peptidyl-tRNA molecules trapped in stalled 50S ribosomal subunits, and thus maintains levels of free tRNAs and 50S ribosomes. The sequence is that of Peptidyl-tRNA hydrolase from Sphingopyxis alaskensis (strain DSM 13593 / LMG 18877 / RB2256) (Sphingomonas alaskensis).